A 109-amino-acid polypeptide reads, in one-letter code: MEMDLNNRLTEDETLEQAYDIFLELAADNLDPADIILFNLQFEERGGAELFDPSEDWQEHVDFDLNPDFFAEVVIGLADSEDGEINDIFARVLLCREKDHKLCHILWRE.

Belongs to the putative dsDNA mimic protein family.

Its function is as follows. May act as a double-stranded DNA (dsDNA) mimic. Probably regulates the activity of a dsDNA-binding protein. The chain is Putative double-stranded DNA mimic protein CKO_01325 from Citrobacter koseri (strain ATCC BAA-895 / CDC 4225-83 / SGSC4696).